Reading from the N-terminus, the 208-residue chain is MKVTLVHLLFMMLLLLLGLGLGLGLGLHMAAAVLEDQPLNEFWPSDSQNTEEGEGIWTTEGLALGYKEMAQPVWPEEAVLSEDEVGGSRMLRAEPRFQSKQDYLKFDLSVRDCNTMMAHKIKEPNQSCINQYTFIHEDPNTVKAVCNGSLVDCDLQGGKCYKSPRPFDLTLCKLAKPGQVTPNCHYLTYITEKSIFMTCNDKRQLETK.

The N-terminal stretch at 1-24 (MKVTLVHLLFMMLLLLLGLGLGLG) is a signal peptide. N-linked (GlcNAc...) asparagine glycans are attached at residues asparagine 125 and asparagine 147.

The protein belongs to the pancreatic ribonuclease family. Post-translationally, the N-terminus is blocked. Glycosylated. Male-specific expression in proximal caput of the epididymis (at protein level).

Its subcellular location is the secreted. Its function is as follows. Secreted proximal epididymal protein required for post-testicular sperm maturation and male fertility. May be involved in sperm adhesion to the egg zona pellucida. Does not have ribonuclease activity. This is Inactive ribonuclease-like protein 10 (Rnase10) from Mus musculus (Mouse).